The primary structure comprises 161 residues: Long arms of the bivalent protein 1 (161 aa).

A PP1 binding motif motif is present at residues 72-75 (KVIW). Residues 85 to 161 (GTMFEDFKED…SDKTMCSGQS (77 aa)) are disordered. The span at 97–115 (QESVSSISNNEANWGSSVN) shows a compositional bias: polar residues. Positions 120-129 (NYEKMQKEET) are enriched in basic and acidic residues. Positions 130-151 (FDPYDSDSDTSEDSDFDEDFED) are enriched in acidic residues.

Interacts with gsp-1 and gsp-2; the interaction is direct.

The protein localises to the chromosome. Its subcellular location is the nucleus. Its function is as follows. Involved in sister chromatid cohesion during mitosis and meiosis. In association with the gsp-2 phosphatase, it both restricts the localization and antagonizes the function of the air-2 kinase during meiosis I and mitosis to promote chromatid cohesion and spindle attachment. This in turn, drives germ cell immortality. Furthermore, may play a role in ensuring the timely assembly of the synaptonemal complex during prophase I of meiosis. The protein is Long arms of the bivalent protein 1 of Caenorhabditis elegans.